The following is a 331-amino-acid chain: MSTKEKLISHVMKEEPVGSRNKVTVVGVGMVGMASAISILLKDLCDELAMVDVMEDKLKGEVMDLQHGSLFLKTKIVGDKDYSVTANSKVVVVTAGARQQEGESRLNLVQRNVNIFKFIIPNIVKYSPNCILMVVSNPVDILTYVAWKLSGFPRHRVIGSGTNLDSARFRHLIGEKLHLHPSSCHAWIVGEHGDSSVPVWSGVNVAGVSLQDLNPQMGTEGDGENWKAIHKEVVDGAYEVIKLKGYTSWAIGMSVADLVESIIKNMHKVHPVSTLVQGMHGVKDEVFLSVPCVLGNSGLTDVIHMTLKADEEKQVQKSAETLWGVQKELTL.

Residues 29–57 (GMVG…MEDK) and Arg-98 each bind NAD(+). Substrate-binding residues include Arg-105, Asn-137, and Arg-168. Residue Asn-137 coordinates NAD(+). Residue His-192 is the Proton acceptor of the active site. Thr-247 contributes to the substrate binding site.

Belongs to the LDH/MDH superfamily. LDH family. Homotetramer.

Its subcellular location is the cytoplasm. It catalyses the reaction (S)-lactate + NAD(+) = pyruvate + NADH + H(+). It functions in the pathway fermentation; pyruvate fermentation to lactate; (S)-lactate from pyruvate: step 1/1. Its function is as follows. Interconverts simultaneously and stereospecifically pyruvate and lactate with concomitant interconversion of NADH and NAD(+). The sequence is that of L-lactate dehydrogenase A chain (ldha) from Parachaenichthys charcoti (Charcot's dragonfish).